We begin with the raw amino-acid sequence, 636 residues long: Ligand-gated ion channel 4 (636 aa).

The first 25 residues, 1–25 (MVICHSCTTFCILLVIDLVPCRIVG), serve as a signal peptide directing secretion. The Extracellular segment spans residues 26–326 (MENVENRVMF…IHMHRRPLFY (301 aa)). N-linked (GlcNAc...) asparagine glycans are attached at residues Asn45, Asn141, Asn179, and Asn227. Cys240 and Cys254 are oxidised to a cystine. Residue Asn284 is glycosylated (N-linked (GlcNAc...) asparagine). Transmembrane regions (helical) follow at residues 327–347 (VFNH…GFLM), 357–377 (MIIT…ESIP), and 383–403 (VPLI…ATCV). Over 404-602 (NVITLNMHRN…QLASVVDRLL (199 aa)) the chain is Cytoplasmic. Residues 603–623 (LCLFCTATLFTIICLLIVPVV) traverse the membrane as a helical segment.

Belongs to the ligand-gated ion channel (TC 1.A.9) family.

It is found in the postsynaptic cell membrane. It localises to the cell membrane. Acetylcholine receptor. This Caenorhabditis briggsae protein is Ligand-gated ion channel 4.